Consider the following 218-residue polypeptide: Thiopurine S-methyltransferase (218 aa).

Residues Trp-10, Leu-45, Glu-66, and Arg-123 each coordinate S-adenosyl-L-methionine.

This sequence belongs to the class I-like SAM-binding methyltransferase superfamily. TPMT family.

Its subcellular location is the cytoplasm. The catalysed reaction is S-adenosyl-L-methionine + a thiopurine = S-adenosyl-L-homocysteine + a thiopurine S-methylether.. The sequence is that of Thiopurine S-methyltransferase from Shewanella loihica (strain ATCC BAA-1088 / PV-4).